Here is a 356-residue protein sequence, read N- to C-terminus: Alpha-N-acetylneuraminide alpha-2,8-sialyltransferase (356 aa).

Residues 1 to 29 (MSPCGRARRQTSRGAMAVLAWKFPRTRLP) are Cytoplasmic-facing. A helical; Signal-anchor for type II membrane protein membrane pass occupies residues 30–48 (MGASALCVVVLCWLYIFPV). Residues 49-356 (YRLPNEKEIV…CEDTSLQPTS (308 aa)) are Lumenal-facing. Asn-71 and Asn-119 each carry an N-linked (GlcNAc...) asparagine glycan. Cystine bridges form between Cys-138–Cys-287 and Cys-152–Cys-347. 2 residues coordinate CMP-N-acetyl-beta-neuraminate: Asn-143 and Asn-166. Asn-214 and Asn-245 each carry an N-linked (GlcNAc...) asparagine glycan. Residues Ser-274, Thr-275, Gly-276, Trp-296, and His-310 each coordinate CMP-N-acetyl-beta-neuraminate. The active-site Proton donor/acceptor is His-322.

It belongs to the glycosyltransferase 29 family.

The protein localises to the golgi apparatus membrane. It carries out the reaction an N-acetyl-alpha-neuraminyl-(2-&gt;3)-beta-D-galactosyl derivative + CMP-N-acetyl-beta-neuraminate = an N-acetyl-alpha-neuraminyl-(2-&gt;8)-N-acetyl-alpha-neuraminyl-(2-&gt;3)-beta-D-galactosyl derivative + CMP + H(+). The catalysed reaction is a ganglioside GM3 (d18:1(4E)) + CMP-N-acetyl-beta-neuraminate = a ganglioside GD3 (d18:1(4E)) + CMP + H(+). The enzyme catalyses a ganglioside GD3 (d18:1(4E)) + CMP-N-acetyl-beta-neuraminate = a ganglioside GT3 (d18:1(4E)) + CMP + H(+). It catalyses the reaction a ganglioside GD1a (d18:1(4E)) + CMP-N-acetyl-beta-neuraminate = a ganglioside GT1a (d18:1(4E)) + CMP + H(+). It carries out the reaction a ganglioside GT1b (d18:1(4E)) + CMP-N-acetyl-beta-neuraminate = a ganglioside GQ1b (d18:1(4E)) + CMP + H(+). The catalysed reaction is a ganglioside GM1b (d18:1(4E)) + CMP-N-acetyl-beta-neuraminate = a ganglioside GD1c (d18:1(4E)) + CMP + H(+). The enzyme catalyses a ganglioside GD3 + CMP-N-acetyl-beta-neuraminate = a ganglioside GT3 + CMP + H(+). It catalyses the reaction [alpha-N-acetylneuraminyl-(2-&gt;8)](n)-alpha-N-acetylneuraminyl-(2-&gt;8)-alpha-N-acetylneuraminyl-(2-&gt;3)-beta-D-galactosyl-(1-&gt;4)-beta-D-glucosyl-(1&lt;-&gt;1)-ceramide + CMP-N-acetyl-beta-neuraminate = [alpha-N-acetylneuraminyl-(2-&gt;8)](n+1)-alpha-N-acetylneuraminyl-(2-&gt;8)-alpha-N-acetylneuraminyl-(2-&gt;3)-beta-D-galactosyl-(1-&gt;4)-beta-D-glucosyl-(1&lt;-&gt;1)-ceramide + CMP + H(+). It functions in the pathway protein modification; protein glycosylation. The protein operates within lipid metabolism; sphingolipid metabolism. Its function is as follows. Catalyzes the addition of sialic acid in alpha 2,8-linkage to the sialic acid moiety of the ganglioside GM3 to form ganglioside GD3; gangliosides are a subfamily of complex glycosphingolipds that contain one or more residues of sialic acid. Can catalyze the addition of a second alpha-2,8- sialic acid to GD3 to form GT3. Can use GM1b, GD1a and GT1b as acceptor substrates to synthesize GD1c, GT1a and GQ1b respectively. The chain is Alpha-N-acetylneuraminide alpha-2,8-sialyltransferase from Pan troglodytes (Chimpanzee).